Here is a 217-residue protein sequence, read N- to C-terminus: Killer cell lectin-like receptor subfamily B member 1F (217 aa).

Residues 1–45 (MDTSKVHGNVKPFRCPGYKQASSPSFSPDACRCPHWHHLALKSGC) lie on the Cytoplasmic side of the membrane. Residues 31–34 (CRCP) carry the LCK-binding motif motif. The helical; Signal-anchor for type II membrane protein transmembrane segment at 46–66 (AGLILLLLSLIGLSVLVRFLV) threads the bilayer. Residues 67 to 217 (QKPPIEKCSV…WICQKTLIHV (151 aa)) lie on the Extracellular side of the membrane. Asn-81 carries an N-linked (GlcNAc...) asparagine glycan. The C-type lectin domain maps to 101-211 (HWNKCLFVSQ…CSSDNHWICQ (111 aa)). Intrachain disulfides connect Cys-122–Cys-210 and Cys-189–Cys-202.

As to expression, highly expressed in dendritic cells. Detectable in natural killer cells.

The protein localises to the membrane. Functionally, binds CLEC2I/Clr-g leading to activation of natural killer cells or costimulation of IL-2 production and proliferation of T-cells in response to antigen stimulation. May contribute to the formation of the immunological synapse between T-cells and antigen-presenting dendritic cells. The polypeptide is Killer cell lectin-like receptor subfamily B member 1F (Klrb1f) (Mus musculus (Mouse)).